A 372-amino-acid chain; its full sequence is MTAAQNAPIPEAGKKVMSTVTLAPALGFVPVAVHFDLFGCLQEIGKPATAQDVCNIHRTRYGDTNLSVSLANDTLFLMGGLGFLDLLPDDVYQANDVTRYLVDTPSAQHGAMHFTSEGLLASAFLMRRLMDTNFEYPFQECDTPFQYAYKLMGNDSLAREHVYSVMHHTGRLDSFNTFMTGKFGRWGTMPDRVRKLGYDLDGLMQSTAPEKLRIVDIGGGRGELLLEMQAAYPHLLQKENLVLQEYNADIGVVPKVTEMAWNYKEDASEQPVKGALLYSMAHVLHNLSDIESIKLLAKVARVMAPTSRLLIQEFTKNAASSTTHAAMILMHAGRERTRAEWRDLAAFAGLEITFEAYPPNGECLVEMRKVLN.

Trp186 is a binding site for S-adenosyl-L-methionine. Catalysis depends on His285, which acts as the Proton acceptor.

The protein belongs to the class I-like SAM-binding methyltransferase superfamily. Cation-independent O-methyltransferase family.

The protein operates within secondary metabolite biosynthesis. Cytochrome P450 monooxygenase; part of the gene cluster that mediates the biosynthesis of bifonsecin B, a dimeric gamma-naphthopyrone. The first step in the biosynthesis of bifonsecin B is the production of gamma-naphthopyrone precursor YWA1 by the non-reducing polyketide synthase albA, via condensation of one acetyl-CoA starter unit with 6 malonyl-CoA units. YWA1 is then methylated by bfoE at position C-6 to yield foncesin which is further methylated at position C-8 by bfoD to produce fonsecin B. A key enzyme in the biosynthetic pathway is the cytochrome P450 monooxygenase bfoB which catalyzes the oxidative dimerization of fonsecin B to bifonsecin B. Bfob also catalyzes the oxidative dimerization of rubrofusarin B into nigerone. The stereoselectivity of bfoB is influenced by the two natural monomeric substrates; homodimerization of fonsecin B yields a stereochemically pure biaryl, M-foncerine B, while rubrofusarin B yields a mixture of enantiomers M- and P-nigerone. The sequence is that of O-methyltransferase bfoE from Aspergillus brasiliensis (strain CBS 101740 / IMI 381727 / IBT 21946).